The primary structure comprises 910 residues: Myelin regulatory factor-like protein (910 aa).

The NDT80 DNA-binding region spans 142–405 (GCSYPQQPLC…SNPGQFENDS (264 aa)). A disordered region spans residues 189–208 (RSRSSEVQDPDSEGQNRMPT). The Peptidase S74 domain maps to 451–559 (SDSRAKQNIQ…KLTNNLEERI (109 aa)). Positions 543-575 (GAVKQLCKLTNNLEERIEELEIWNRKLARLKRL) form a coiled coil. A helical membrane pass occupies residues 628–648 (LVITLIAVMAFCALTIVALYI). Positions 661–682 (LPPSNITSSQEPALLPTASSSA) are disordered. Residues 663 to 682 (PSNITSSQEPALLPTASSSA) are compositionally biased toward polar residues.

This sequence belongs to the MRF family.

Its subcellular location is the membrane. This Homo sapiens (Human) protein is Myelin regulatory factor-like protein (MYRFL).